A 468-amino-acid chain; its full sequence is Glutamate--tRNA ligase 2 (468 aa).

A 'HIGH' region motif is present at residues 9 to 19 (PSPTGSLHLGG). The 'KMSKS' region motif lies at 238–242 (KLSKR). Lysine 241 is a binding site for ATP.

It belongs to the class-I aminoacyl-tRNA synthetase family. Glutamate--tRNA ligase type 1 subfamily. In terms of assembly, monomer.

It localises to the cytoplasm. It catalyses the reaction tRNA(Glu) + L-glutamate + ATP = L-glutamyl-tRNA(Glu) + AMP + diphosphate. Its function is as follows. Catalyzes the attachment of glutamate to tRNA(Glu) in a two-step reaction: glutamate is first activated by ATP to form Glu-AMP and then transferred to the acceptor end of tRNA(Glu). The sequence is that of Glutamate--tRNA ligase 2 from Anaplasma phagocytophilum (strain HZ).